We begin with the raw amino-acid sequence, 364 residues long: Methylthioribose-1-phosphate isomerase (364 aa).

Catalysis depends on Asp-254, which acts as the Proton donor.

It belongs to the eIF-2B alpha/beta/delta subunits family. MtnA subfamily.

It is found in the cytoplasm. It localises to the nucleus. It catalyses the reaction 5-(methylsulfanyl)-alpha-D-ribose 1-phosphate = 5-(methylsulfanyl)-D-ribulose 1-phosphate. It participates in amino-acid biosynthesis; L-methionine biosynthesis via salvage pathway; L-methionine from S-methyl-5-thio-alpha-D-ribose 1-phosphate: step 1/6. In terms of biological role, catalyzes the interconversion of methylthioribose-1-phosphate (MTR-1-P) into methylthioribulose-1-phosphate (MTRu-1-P). This chain is Methylthioribose-1-phosphate isomerase, found in Drosophila ananassae (Fruit fly).